A 230-amino-acid chain; its full sequence is Large ribosomal subunit protein uL1 (230 aa).

This sequence belongs to the universal ribosomal protein uL1 family. Part of the 50S ribosomal subunit.

In terms of biological role, binds directly to 23S rRNA. The L1 stalk is quite mobile in the ribosome, and is involved in E site tRNA release. Functionally, protein L1 is also a translational repressor protein, it controls the translation of the L11 operon by binding to its mRNA. The sequence is that of Large ribosomal subunit protein uL1 from Acholeplasma laidlawii (strain PG-8A).